A 167-amino-acid polypeptide reads, in one-letter code: Phosphopantetheine adenylyltransferase (167 aa).

Thr-9 contacts substrate. ATP-binding positions include 9–10 (TF) and His-17. Positions 41, 73, and 87 each coordinate substrate. ATP contacts are provided by residues 88–90 (GLR), Glu-98, and 123–129 (NSYISST).

This sequence belongs to the bacterial CoaD family. As to quaternary structure, homohexamer. Requires Mg(2+) as cofactor.

The protein localises to the cytoplasm. It catalyses the reaction (R)-4'-phosphopantetheine + ATP + H(+) = 3'-dephospho-CoA + diphosphate. The protein operates within cofactor biosynthesis; coenzyme A biosynthesis; CoA from (R)-pantothenate: step 4/5. In terms of biological role, reversibly transfers an adenylyl group from ATP to 4'-phosphopantetheine, yielding dephospho-CoA (dPCoA) and pyrophosphate. This chain is Phosphopantetheine adenylyltransferase, found in Chromohalobacter salexigens (strain ATCC BAA-138 / DSM 3043 / CIP 106854 / NCIMB 13768 / 1H11).